Consider the following 155-residue polypeptide: Putative pre-16S rRNA nuclease (155 aa).

Belongs to the YqgF nuclease family.

The protein resides in the cytoplasm. Functionally, could be a nuclease involved in processing of the 5'-end of pre-16S rRNA. This is Putative pre-16S rRNA nuclease from Paramagnetospirillum magneticum (strain ATCC 700264 / AMB-1) (Magnetospirillum magneticum).